The sequence spans 510 residues: D-alanine--D-alanyl carrier protein ligase (510 aa).

157-158 lines the ATP pocket; sequence TS. Asp-202 serves as a coordination point for D-alanine. 297–302 is an ATP binding site; it reads NTYGPT. Val-306 provides a ligand contact to D-alanine. The ATP site is built by Asp-389 and Lys-498. Position 498 (Lys-498) interacts with D-alanine.

It belongs to the ATP-dependent AMP-binding enzyme family. DltA subfamily.

The protein resides in the cytoplasm. It carries out the reaction holo-[D-alanyl-carrier protein] + D-alanine + ATP = D-alanyl-[D-alanyl-carrier protein] + AMP + diphosphate. The protein operates within cell wall biogenesis; lipoteichoic acid biosynthesis. Catalyzes the first step in the D-alanylation of lipoteichoic acid (LTA), the activation of D-alanine and its transfer onto the D-alanyl carrier protein (Dcp) DltC. In an ATP-dependent two-step reaction, forms a high energy D-alanyl-AMP intermediate, followed by transfer of the D-alanyl residue as a thiol ester to the phosphopantheinyl prosthetic group of the Dcp. D-alanylation of LTA plays an important role in modulating the properties of the cell wall in Gram-positive bacteria, influencing the net charge of the cell wall. The sequence is that of D-alanine--D-alanyl carrier protein ligase from Listeria monocytogenes serotype 4a (strain HCC23).